We begin with the raw amino-acid sequence, 435 residues long: Histidine--tRNA ligase (435 aa).

It belongs to the class-II aminoacyl-tRNA synthetase family. In terms of assembly, homodimer.

The protein resides in the cytoplasm. The catalysed reaction is tRNA(His) + L-histidine + ATP = L-histidyl-tRNA(His) + AMP + diphosphate + H(+). In Synechococcus sp. (strain ATCC 27144 / PCC 6301 / SAUG 1402/1) (Anacystis nidulans), this protein is Histidine--tRNA ligase.